A 984-amino-acid polypeptide reads, in one-letter code: Mast/stem cell growth factor receptor Kit (984 aa).

Residues 1–21 form the signal peptide; the sequence is MEYHWILLCVSLCFTFHPGDT. Residues 22 to 514 are Extracellular-facing; that stretch reads KPTITPAGTY…RTISHDLFSP (493 aa). Ig-like C2-type domains follow at residues 23–97, 98–197, 203–300, 311–395, and 398–498; these read PTIT…ERAS, IYIY…LTVR, PPVI…VWLD, PVNN…ASVN, and FTIF…QAFT. Intrachain disulfides connect Cys44–Cys87, Cys129–Cys178, Cys144–Cys175, and Cys226–Cys284. N-linked (GlcNAc...) asparagine glycosylation is found at Asn227, Asn260, Asn314, Asn351, Asn395, Asn448, and Asn476. Cysteines 421 and 487 form a disulfide. The helical transmembrane segment at 515–535 threads the bilayer; sequence LLIGSVSAACILCLILIVLFY. Residues 536 to 984 lie on the Cytoplasmic side of the membrane; that stretch reads KYMQKPKYQI…GTEPFRVQRV (449 aa). Tyr558 provides a ligand contact to Mg(2+). Residues Tyr558 and Tyr560 each carry the phosphotyrosine; by autocatalysis modification. The region spanning 579–926 is the Protein kinase domain; the sequence is LRFGKTLGSG…LSDTTKHIYL (348 aa). Residues 586–593, Lys613, and 661–667 each bind ATP; these read GSGAFGKV and EYCCFGD. A phosphotyrosine; by autocatalysis mark is found at Tyr690 and Tyr707. Low complexity predominate over residues 711-723; sequence RPSAAGKPSSSSS. The disordered stretch occupies residues 711-749; sequence RPSAAGKPSSSSSSEKRRSLREGSPYVEEDSESEMFDED. Residues 737 to 749 are compositionally biased toward acidic residues; it reads VEEDSESEMFDED. Asp781 functions as the Proton acceptor in the catalytic mechanism. Position 785 (Arg785) interacts with ATP. Positions 786 and 799 each coordinate Mg(2+). Tyr812 and Tyr925 each carry phosphotyrosine; by autocatalysis. The tract at residues 936-963 is disordered; that stretch reads PRGREESSTHSMASQPFNSAGNNSPPSR. Residues 944–960 show a composition bias toward polar residues; sequence THSMASQPFNSAGNNSP.

It belongs to the protein kinase superfamily. Tyr protein kinase family. CSF-1/PDGF receptor subfamily. Post-translationally, ubiquitinated. Rapidly ubiquitinated after autophosphorylation induced by kitlg/scf binding, leading to internalization and degradation. Autophosphorylated on tyrosine residues. Phosphorylated tyrosine residues are important for interaction with specific binding partners.

The protein resides in the cell membrane. It carries out the reaction L-tyrosyl-[protein] + ATP = O-phospho-L-tyrosyl-[protein] + ADP + H(+). Tyrosine-protein kinase that acts as a cell-surface receptor for the cytokine kitlg/scf and plays an essential role in the regulation of cell survival and proliferation, hematopoiesis, stem cell maintenance, gametogenesis, mast cell development, migration and function, and in melanogenesis. The chain is Mast/stem cell growth factor receptor Kit (kit) from Takifugu rubripes (Japanese pufferfish).